Consider the following 420-residue polypeptide: Tyrosine--tRNA ligase (420 aa).

Position 33 (tyrosine 33) interacts with L-tyrosine. Positions 38–47 (PTADSLHIGH) match the 'HIGH' region motif. 2 residues coordinate L-tyrosine: tyrosine 168 and glutamine 172. A 'KMSKS' region motif is present at residues 231-235 (KFGKT). Lysine 234 contributes to the ATP binding site. Positions 353–419 (MLLVDALIKV…GKKNYYLVKL (67 aa)) constitute an S4 RNA-binding domain.

The protein belongs to the class-I aminoacyl-tRNA synthetase family. TyrS type 1 subfamily. In terms of assembly, homodimer.

The protein resides in the cytoplasm. It carries out the reaction tRNA(Tyr) + L-tyrosine + ATP = L-tyrosyl-tRNA(Tyr) + AMP + diphosphate + H(+). Its function is as follows. Catalyzes the attachment of tyrosine to tRNA(Tyr) in a two-step reaction: tyrosine is first activated by ATP to form Tyr-AMP and then transferred to the acceptor end of tRNA(Tyr). This is Tyrosine--tRNA ligase from Desulfitobacterium hafniense (strain DSM 10664 / DCB-2).